The following is a 475-amino-acid chain: MNNAIAQQIAEQGGVEAYLHAQQHKSLLRFLTCGSVDDGKSTLIGRLLHDTRQIYEDQLSTLHTDSKRLGTQGDKLDLALLVDGLQAEREQGITIDVAYRYFSTEKRKFIIADTPGHEQYTRNMATGASTCDVAILLIDVRKGVLDQTRLHSFISTLLGIRHLVVAVNKMDLVAFDEQIFQGIRQDYLRFAEQLPVDLDITFVPLSALEGDNVAALGKAMPWYNGPTLLDVLETVEVINLNEQQPARFPVQYVNRPNLDFRGYAGTVAAGVLRVGQAVKVLPSGVTSTISRIVTFDGDLTEAWAGEAVTLVLKDEVDISRGDLLVDAGETLTEVQNAQVDVVWMTEQPLVAGQSFDIKIAGKKTRARVDNIQYQVDINTLTQRVADSLPLNGIGLVELAFDEPMILDKYADNPTTGGMIFIDRLSNVTVGAGMVRQPLQDVYREPGAYGEFELALNALVRRHFPHWGARDLLGGK.

Residues Lys-25–Leu-240 enclose the tr-type G domain. A G1 region spans residues Gly-34–Ser-41. Gly-34 to Ser-41 contributes to the GTP binding site. Positions Gly-92–Asp-96 are G2. Residues Asp-113–Gly-116 are G3. Residues Asp-113–His-117 and Asn-168–Asp-171 contribute to the GTP site. The tract at residues Asn-168–Asp-171 is G4. The G5 stretch occupies residues Ser-206 to Leu-208.

Belongs to the TRAFAC class translation factor GTPase superfamily. Classic translation factor GTPase family. CysN/NodQ subfamily. As to quaternary structure, heterodimer composed of CysD, the smaller subunit, and CysN.

It carries out the reaction sulfate + ATP + H(+) = adenosine 5'-phosphosulfate + diphosphate. The protein operates within sulfur metabolism; hydrogen sulfide biosynthesis; sulfite from sulfate: step 1/3. With CysD forms the ATP sulfurylase (ATPS) that catalyzes the adenylation of sulfate producing adenosine 5'-phosphosulfate (APS) and diphosphate, the first enzymatic step in sulfur assimilation pathway. APS synthesis involves the formation of a high-energy phosphoric-sulfuric acid anhydride bond driven by GTP hydrolysis by CysN coupled to ATP hydrolysis by CysD. This Sodalis glossinidius (strain morsitans) protein is Sulfate adenylyltransferase subunit 1.